Consider the following 128-residue polypeptide: Gastrotropin (128 aa).

N-acetylalanine is present on Ala2.

It belongs to the calycin superfamily. Fatty-acid binding protein (FABP) family. In terms of tissue distribution, expressed in ovary granulosa and luteal cells.

Its subcellular location is the cytoplasm. It localises to the membrane. Functionally, binds to bile acids and is involved in enterohepatic bile acid metabolism. Required for efficient apical to basolateral transport of conjugated bile acids in ileal enterocytes. Stimulates gastric acid and pepsinogen secretion. This Mus musculus (Mouse) protein is Gastrotropin (Fabp6).